A 337-amino-acid chain; its full sequence is DNA-directed RNA polymerase subunit alpha (337 aa).

Residues 1–223 (MLISQRPALT…ELFGLAQELN (223 aa)) are alpha N-terminal domain (alpha-NTD). Positions 238 to 337 (SEHIAAYSMP…IDTEGEDIAE (100 aa)) are alpha C-terminal domain (alpha-CTD).

The protein belongs to the RNA polymerase alpha chain family. As to quaternary structure, homodimer. The RNAP catalytic core consists of 2 alpha, 1 beta, 1 beta' and 1 omega subunit. When a sigma factor is associated with the core the holoenzyme is formed, which can initiate transcription.

It catalyses the reaction RNA(n) + a ribonucleoside 5'-triphosphate = RNA(n+1) + diphosphate. Functionally, DNA-dependent RNA polymerase catalyzes the transcription of DNA into RNA using the four ribonucleoside triphosphates as substrates. This chain is DNA-directed RNA polymerase subunit alpha, found in Corynebacterium jeikeium (strain K411).